Consider the following 398-residue polypeptide: Fructose-bisphosphate aldolase 2, chloroplastic (398 aa).

A chloroplast-targeting transit peptide spans M1–R46. R95 contacts substrate. A Phosphoserine modification is found at S157. K185 contributes to the substrate binding site. Position 215 is a phosphoserine (S215). E225 acts as the Proton acceptor in catalysis. K267 (schiff-base intermediate with dihydroxyacetone-P) is an active-site residue. S309–G311 lines the substrate pocket. K394 is subject to N6,N6,N6-trimethyllysine.

It belongs to the class I fructose-bisphosphate aldolase family. Homotetramer. Post-translationally, can be trimethylated at Lys-394 by LSMT-L. The methylation level has no influence on the ologomerization state or on the kinetic properties of the enzyme. In terms of processing, phosphorylated on tyrosine residues in response to abscisic acid (ABA) in germinating seeds. As to expression, highly expressed in rosettes leaves.

The protein resides in the plastid. It is found in the chloroplast. It localises to the plastoglobule. The protein localises to the chloroplast stroma. The enzyme catalyses beta-D-fructose 1,6-bisphosphate = D-glyceraldehyde 3-phosphate + dihydroxyacetone phosphate. It participates in carbohydrate degradation; glycolysis; D-glyceraldehyde 3-phosphate and glycerone phosphate from D-glucose: step 4/4. Functionally, plays a key role in glycolysis and gluconeogenesis. The chain is Fructose-bisphosphate aldolase 2, chloroplastic from Arabidopsis thaliana (Mouse-ear cress).